The following is a 63-amino-acid chain: Large ribosomal subunit protein bL28 (63 aa).

The protein belongs to the bacterial ribosomal protein bL28 family.

This Dictyoglomus thermophilum (strain ATCC 35947 / DSM 3960 / H-6-12) protein is Large ribosomal subunit protein bL28.